A 221-amino-acid polypeptide reads, in one-letter code: Protein-L-isoaspartate O-methyltransferase (221 aa).

Residue Ser-64 is part of the active site.

Belongs to the methyltransferase superfamily. L-isoaspartyl/D-aspartyl protein methyltransferase family.

It localises to the cytoplasm. It catalyses the reaction [protein]-L-isoaspartate + S-adenosyl-L-methionine = [protein]-L-isoaspartate alpha-methyl ester + S-adenosyl-L-homocysteine. Functionally, catalyzes the methyl esterification of L-isoaspartyl residues in peptides and proteins that result from spontaneous decomposition of normal L-aspartyl and L-asparaginyl residues. It plays a role in the repair and/or degradation of damaged proteins. This Cytophaga hutchinsonii (strain ATCC 33406 / DSM 1761 / CIP 103989 / NBRC 15051 / NCIMB 9469 / D465) protein is Protein-L-isoaspartate O-methyltransferase.